We begin with the raw amino-acid sequence, 4621 residues long: Dynein axonemal heavy chain 5 (4621 aa).

The interval 1–1938 (MFRIGRRQLW…MIHITDVAFI (1938 aa)) is stem. Coiled coils occupy residues 260 to 305 (WIKQ…DQLK) and 803 to 825 (LENAFAKIKDLELLLDRVNDLIE). The segment at 901–921 (VCHENASPSGNTSGRREGHSE) is disordered. Coiled-coil stretches lie at residues 1065-1094 (AVKNNEDSDSDAEVEENELQETLEIASINL) and 1433-1462 (DVNIEKINNELLEFQNRCRKLPRALKDWQA). AAA regions lie at residues 1939-2161 (YQNE…VLRT), 2221-2440 (TAIS…IQNL), 2547-2800 (VYPP…IWQG), and 2913-3167 (LYNE…FRRS). Residues 1977 to 1984 (GPAGTGKT) and 2259 to 2266 (GPSGSGKT) contribute to the ATP site. Positions 3182–3479 (YKFIYEEKHM…QTLLEDADRC (298 aa)) are stalk. Coiled coils occupy residues 3186 to 3299 (YEEK…QTIK), 3423 to 3490 (LKAN…STLI), and 3729 to 3814 (ILTE…EEYR). AAA stretches follow at residues 3564 to 3794 (LIDA…EVTQ) and 4009 to 4223 (ARKY…FIQN). The stretch at 4389 to 4417 (FLRQEIDRMQRVLSLVRSTLTELKLAVDG) forms a coiled coil.

The protein belongs to the dynein heavy chain family. Interacts with DNAL1. Consists of at least two heavy chains and a number of intermediate and light chains. Strongly expressed in lung and kidney and weaker expression seen in brain, heart and testis. In the brain, expressed in ependymal cells lining the brain ventricles and the aqueduct.

It localises to the cytoplasm. Its subcellular location is the cytoskeleton. The protein resides in the cilium axoneme. Force generating protein of respiratory cilia. Produces force towards the minus ends of microtubules. Dynein has ATPase activity; the force-producing power stroke is thought to occur on release of ADP. Required for structural and functional integrity of the cilia of ependymal cells lining the brain ventricles. The chain is Dynein axonemal heavy chain 5 from Mus musculus (Mouse).